A 3184-amino-acid chain; its full sequence is Probable serine/threonine-protein kinase pats1 (3184 aa).

The segment covering 369-378 (DPPPPPPSNS) has biased composition (pro residues). 2 disordered regions span residues 369-516 (DPPP…QIPP) and 913-1013 (SITR…TSIL). Over residues 379-415 (SPPISKSTSNNNLNVSNYHNNNNNNNNSNSNLSNSGN) the composition is skewed to low complexity. Polar residues predominate over residues 421 to 450 (DFQSQNLVKSYNRENSGNSLNSMLHQTSLP). Low complexity predominate over residues 451–512 (NNNNSNVVNN…NNNNSNNNNS (62 aa)). The Myotubularin phosphatase domain maps to 842–1348 (CFPDHSLLQE…FQDTMWNEYF (507 aa)). Positions 913–934 (SITRATSPEDQNNGSSNYLLTP) are enriched in polar residues. Residues 935–993 (NSPNSSSSNLANNNNSNNNNINNNNNNNNNNNNNNNNNSNNNNNNNNNNNNNNNNNNNN) show a composition bias toward low complexity. Residues 1000 to 1013 (SRSTTIDNGQTSIL) show a composition bias toward polar residues. 13 LRR repeats span residues 1391-1412 (FLET…STLY), 1416-1438 (GLRE…SSLV), 1439-1460 (KLEK…TVVL), 1467-1488 (SLTE…FSMF), 1491-1512 (SLKK…LGML), 1514-1535 (NLIE…GVGI), 1541-1563 (KLCI…GDLK), 1564-1585 (SLEK…FRQL), 1587-1608 (NLEE…VCFL), 1610-1631 (NLKK…ISQL), 1633-1654 (KLMI…IGQL), 1656-1678 (QLVS…MGLL), and 1680-1701 (NLVE…IVSL). In terms of domain architecture, Roc spans 1716–1910 (GQEQCYKMKL…EKLEALVQSQ (195 aa)). Residues 1716-1910 (GQEQCYKMKL…EKLEALVQSQ (195 aa)) form a small GTPase-like region. GTP is bound by residues 1729-1736 (GQENVGKT), 1797-1801 (DFAGQ), and 1854-1857 (THLD). The region spanning 1918 to 2127 (PRSYMLLENL…KCYWKNGMIL (210 aa)) is the COR domain. Positions 2247-2519 (LMIEELIGEG…RLIKIAEAMF (273 aa)) constitute a Protein kinase domain. ATP contacts are provided by residues 2253–2261 (IGEGGAALV) and lysine 2274. The active-site Proton acceptor is the aspartate 2379. Disordered regions lie at residues 2528–2609 (YQQQ…TISH) and 2652–2671 (NSIN…NSLL). The span at 2529 to 2555 (QQQQQQQQQQQQSSPSKSSSTSPIIKS) shows a compositional bias: low complexity. Residues 2556–2576 (LNLSTVSELGESSNQTPKQNI) show a composition bias toward polar residues. WD repeat units lie at residues 2745–2785 (PNQG…KYIQ), 2790–2829 (ANKD…KIKS), 2909–2947 (AHER…HTIE), 2949–2986 (AHSS…LVSE), and 2990–3040 (KHKD…NSRS). Residues 3055–3126 (GSSNSITNSN…NYYYSNNVNS (72 aa)) show a composition bias toward low complexity. The segment at 3055-3164 (GSSNSITNSN…TPPGSKGLMQ (110 aa)) is disordered. Over residues 3141–3157 (HEQTSPNSATPLSSTPP) the composition is skewed to polar residues.

Belongs to the protein kinase superfamily. TKL Ser/Thr protein kinase family. ROCO subfamily.

It carries out the reaction L-seryl-[protein] + ATP = O-phospho-L-seryl-[protein] + ADP + H(+). The enzyme catalyses L-threonyl-[protein] + ATP = O-phospho-L-threonyl-[protein] + ADP + H(+). May act as a serine/threonine-protein kinase and guanine-nucleotide releasing factor. Essential regulator of cytokinesis involved in the binding to actomyosin cytoskeleton. The polypeptide is Probable serine/threonine-protein kinase pats1 (pats1) (Dictyostelium discoideum (Social amoeba)).